Consider the following 364-residue polypeptide: Spermidine/putrescine import ATP-binding protein PotA (364 aa).

Residues 10–244 enclose the ABC transporter domain; sequence IEVVNVSKIF…PAERFVADFI (235 aa). 46-53 is an ATP binding site; sequence GPSGCGKT.

Belongs to the ABC transporter superfamily. Spermidine/putrescine importer (TC 3.A.1.11.1) family. As to quaternary structure, the complex is composed of two ATP-binding proteins (PotA), two transmembrane proteins (PotB and PotC) and a solute-binding protein (PotD).

Its subcellular location is the cell inner membrane. It catalyses the reaction ATP + H2O + polyamine-[polyamine-binding protein]Side 1 = ADP + phosphate + polyamineSide 2 + [polyamine-binding protein]Side 1.. Functionally, part of the ABC transporter complex PotABCD involved in spermidine/putrescine import. Responsible for energy coupling to the transport system. This is Spermidine/putrescine import ATP-binding protein PotA from Mesorhizobium japonicum (strain LMG 29417 / CECT 9101 / MAFF 303099) (Mesorhizobium loti (strain MAFF 303099)).